We begin with the raw amino-acid sequence, 357 residues long: Serine proteinase inhibitor 1 (357 aa).

Belongs to the serpin family. Poxviruses subfamily.

It localises to the host cytoplasm. Its function is as follows. Plays a role in mediating viral host range. May act to inhibit a caspase independent form of apoptosis to allow efficient virus replication in infected cells. The chain is Serine proteinase inhibitor 1 (OPG208) from Monkeypox virus.